The primary structure comprises 471 residues: ATP synthase subunit beta (471 aa).

153–160 (GGAGVGKT) is an ATP binding site.

The protein belongs to the ATPase alpha/beta chains family. In terms of assembly, F-type ATPases have 2 components, CF(1) - the catalytic core - and CF(0) - the membrane proton channel. CF(1) has five subunits: alpha(3), beta(3), gamma(1), delta(1), epsilon(1). CF(0) has three main subunits: a(1), b(2) and c(9-12). The alpha and beta chains form an alternating ring which encloses part of the gamma chain. CF(1) is attached to CF(0) by a central stalk formed by the gamma and epsilon chains, while a peripheral stalk is formed by the delta and b chains.

Its subcellular location is the cell membrane. The enzyme catalyses ATP + H2O + 4 H(+)(in) = ADP + phosphate + 5 H(+)(out). Functionally, produces ATP from ADP in the presence of a proton gradient across the membrane. The catalytic sites are hosted primarily by the beta subunits. The protein is ATP synthase subunit beta of Levilactobacillus brevis (strain ATCC 367 / BCRC 12310 / CIP 105137 / JCM 1170 / LMG 11437 / NCIMB 947 / NCTC 947) (Lactobacillus brevis).